A 233-amino-acid polypeptide reads, in one-letter code: Leucyl/phenylalanyl-tRNA--protein transferase (233 aa).

It belongs to the L/F-transferase family.

The protein resides in the cytoplasm. The enzyme catalyses N-terminal L-lysyl-[protein] + L-leucyl-tRNA(Leu) = N-terminal L-leucyl-L-lysyl-[protein] + tRNA(Leu) + H(+). It catalyses the reaction N-terminal L-arginyl-[protein] + L-leucyl-tRNA(Leu) = N-terminal L-leucyl-L-arginyl-[protein] + tRNA(Leu) + H(+). It carries out the reaction L-phenylalanyl-tRNA(Phe) + an N-terminal L-alpha-aminoacyl-[protein] = an N-terminal L-phenylalanyl-L-alpha-aminoacyl-[protein] + tRNA(Phe). Its function is as follows. Functions in the N-end rule pathway of protein degradation where it conjugates Leu, Phe and, less efficiently, Met from aminoacyl-tRNAs to the N-termini of proteins containing an N-terminal arginine or lysine. The polypeptide is Leucyl/phenylalanyl-tRNA--protein transferase (Shewanella denitrificans (strain OS217 / ATCC BAA-1090 / DSM 15013)).